The sequence spans 190 residues: UPF0301 protein PSPPH_0476 (190 aa).

Belongs to the UPF0301 (AlgH) family.

This chain is UPF0301 protein PSPPH_0476, found in Pseudomonas savastanoi pv. phaseolicola (strain 1448A / Race 6) (Pseudomonas syringae pv. phaseolicola (strain 1448A / Race 6)).